Consider the following 613-residue polypeptide: Zinc metalloproteinase-disintegrin-like VMP-III (613 aa).

The signal sequence occupies residues 1–20 (MIQVLLVTLCLAAFPYQGSS). Positions 21 to 190 (IILDSGNVND…KKASQLVVTP (170 aa)) are excised as a propeptide. The Peptidase M12B domain maps to 200–396 (KYIELVIVAD…NRPPCILNKP (197 aa)). Residue Glu-203 coordinates Ca(2+). Residue Asn-219 is glycosylated (N-linked (GlcNAc...) asparagine). Residue Asp-287 coordinates Ca(2+). Intrachain disulfides connect Cys-311-Cys-391, Cys-351-Cys-375, and Cys-353-Cys-358. Residue His-336 participates in Zn(2+) binding. The active site involves Glu-337. His-340 and His-346 together coordinate Zn(2+). 8 residues coordinate Ca(2+): Cys-391, Asn-394, Val-406, Asn-409, Phe-411, Glu-413, Glu-416, and Asp-419. In terms of domain architecture, Disintegrin spans 404-490 (PPVCGNYFVE…ECPTDDFQRN (87 aa)). 14 disulfides stabilise this stretch: Cys-407–Cys-436, Cys-418–Cys-431, Cys-420–Cys-426, Cys-430–Cys-453, Cys-444–Cys-450, Cys-449–Cys-475, Cys-462–Cys-482, Cys-469–Cys-501, Cys-494–Cys-506, Cys-513–Cys-563, Cys-528–Cys-574, Cys-541–Cys-551, Cys-558–Cys-600, and Cys-594–Cys-606. Residues 468–470 (ECD) carry the D/ECD-tripeptide motif. Asn-503 carries an N-linked (GlcNAc...) asparagine glycan.

It belongs to the venom metalloproteinase (M12B) family. P-III subfamily. P-IIIa sub-subfamily. As to quaternary structure, monomer. Zn(2+) is required as a cofactor. In terms of tissue distribution, expressed by the venom gland.

The protein resides in the secreted. Snake venom metalloproteinase that impairs hemostasis in the envenomed animal. The sequence is that of Zinc metalloproteinase-disintegrin-like VMP-III from Agkistrodon piscivorus leucostoma (Western cottonmouth).